The chain runs to 213 residues: Ribosomal RNA small subunit methyltransferase G (213 aa).

S-adenosyl-L-methionine contacts are provided by residues Gly55, 105–106 (AE), and Arg124.

Belongs to the methyltransferase superfamily. RNA methyltransferase RsmG family.

The protein localises to the cytoplasm. In terms of biological role, specifically methylates the N7 position of a guanine in 16S rRNA. This Fervidobacterium nodosum (strain ATCC 35602 / DSM 5306 / Rt17-B1) protein is Ribosomal RNA small subunit methyltransferase G.